Reading from the N-terminus, the 769-residue chain is TSC22 domain family protein 2 (769 aa).

4 disordered regions span residues 20–86, 224–292, 334–353, and 520–563; these read AQVA…TVSP, HGLD…PQPM, AQPG…YPQP, and VPAP…SLPQ. A compositionally biased stretch (acidic residues) spans 28–37; it reads EDTESLDDPD. Residues 229-252 are compositionally biased toward polar residues; the sequence is GTDSSLTAVSQLPPSEKMSQPTLA. A compositionally biased stretch (low complexity) spans 269–279; that stretch reads GGAVAPSSASL. A compositionally biased stretch (low complexity) spans 531–541; the sequence is SSHTPVSRSSS. The segment covering 542 to 563 has biased composition (polar residues); that stretch reads VIQQVGSPLAQGTHSAPTSLPQ. The stretch at 691–725 forms a coiled coil; the sequence is MYAVREEVEVLKEQIKELVERNSLLERENALLKSL. Residues 726-745 show a composition bias toward polar residues; it reads SNNDQLSQLPAQQANPGSTS. Positions 726-769 are disordered; the sequence is SNNDQLSQLPAQQANPGSTSQQQAMIAQPPQPTQPPQQPNVSSA. Pro residues predominate over residues 754 to 763; the sequence is PPQPTQPPQQ.

It belongs to the TSC-22/Dip/Bun family. As to quaternary structure, interacts with NRBP1. Interacts with PKM isoform M2; the interaction results in reduced nuclear levels of PKM isoform M2, leading to repression of cyclin CCND1 transcription and reduced cell growth. Interacts with WDR77. As to expression, expressed in the cortex, medulla and papilla of the kidney. In terms of tissue distribution, expressed in the kidney.

Reduces the level of nuclear PKM isoform M2 which results in repression of cyclin CCND1 transcription and reduced cell growth. Its function is as follows. May protect kidney cells from hyperosmotic stress. The polypeptide is TSC22 domain family protein 2 (Mus musculus (Mouse)).